A 342-amino-acid chain; its full sequence is N-acetyl-gamma-glutamyl-phosphate reductase (342 aa).

The active site involves C149.

This sequence belongs to the NAGSA dehydrogenase family. Type 1 subfamily.

It localises to the cytoplasm. The catalysed reaction is N-acetyl-L-glutamate 5-semialdehyde + phosphate + NADP(+) = N-acetyl-L-glutamyl 5-phosphate + NADPH + H(+). Its pathway is amino-acid biosynthesis; L-arginine biosynthesis; N(2)-acetyl-L-ornithine from L-glutamate: step 3/4. Functionally, catalyzes the NADPH-dependent reduction of N-acetyl-5-glutamyl phosphate to yield N-acetyl-L-glutamate 5-semialdehyde. The polypeptide is N-acetyl-gamma-glutamyl-phosphate reductase (Laribacter hongkongensis (strain HLHK9)).